Here is a 237-residue protein sequence, read N- to C-terminus: Prospore formation at selected spindle poles protein 1 (237 aa).

The protein resides in the nucleus. The protein localises to the cytoplasm. Its subcellular location is the cytoskeleton. It is found in the microtubule organizing center. It localises to the spindle pole body. Involved in the pathway that organizes the shaping and sizing of the prospore membrane (PSM) during sporulation. Required to localize MPC54 to all four spindle pole bodies, and localize DON1 and SPO14 to four prospore membranes. The protein is Prospore formation at selected spindle poles protein 1 (PFS1) of Saccharomyces cerevisiae (strain ATCC 204508 / S288c) (Baker's yeast).